Consider the following 91-residue polypeptide: Small ribosomal subunit protein uS15c (91 aa).

This sequence belongs to the universal ribosomal protein uS15 family. As to quaternary structure, part of the 30S ribosomal subunit.

It localises to the plastid. It is found in the chloroplast. The chain is Small ribosomal subunit protein uS15c (rps15) from Phalaenopsis aphrodite subsp. formosana (Moth orchid).